Reading from the N-terminus, the 339-residue chain is N-acetylmuramate/N-acetylglucosamine kinase (339 aa).

The protein belongs to the kinase AmgK family.

The enzyme catalyses N-acetyl-D-muramate + ATP = N-acetyl-alpha-D-muramate 1-phosphate + ADP + H(+). It carries out the reaction N-acetyl-D-glucosamine + ATP = N-acetyl-alpha-D-glucosamine 1-phosphate + ADP + H(+). Its pathway is cell wall biogenesis; peptidoglycan recycling. In terms of biological role, sugar kinase that catalyzes the ATP-dependent phosphorylation of N-acetylmuramate (MurNAc) and N-acetylglucosamine (GlcNAc) at its C1 hydroxyl group, leading to MurNAc alpha-1P and GlcNAc alpha-1P, respectively. Is involved in peptidoglycan recycling as part of a cell wall recycling pathway that bypasses de novo biosynthesis of the peptidoglycan precursor UDP-MurNAc. Plays a role in intrinsic resistance to fosfomycin, which targets the de novo synthesis of UDP-MurNAc. Is also able to use N-acetylgalactosamine (GalNAc) as a substrate, but not N-acetylmannosamine, N-deacetylated sugars or glucose. This is N-acetylmuramate/N-acetylglucosamine kinase from Pseudomonas putida (strain ATCC 47054 / DSM 6125 / CFBP 8728 / NCIMB 11950 / KT2440).